Here is a 212-residue protein sequence, read N- to C-terminus: Ribosomal RNA small subunit methyltransferase G (212 aa).

S-adenosyl-L-methionine contacts are provided by residues Gly-73, 127 to 128, and Arg-143; that span reads IE.

This sequence belongs to the methyltransferase superfamily. RNA methyltransferase RsmG family.

It is found in the cytoplasm. The catalysed reaction is guanosine(527) in 16S rRNA + S-adenosyl-L-methionine = N(7)-methylguanosine(527) in 16S rRNA + S-adenosyl-L-homocysteine. Functionally, specifically methylates the N7 position of guanine in position 527 of 16S rRNA. In Methylobacterium sp. (strain 4-46), this protein is Ribosomal RNA small subunit methyltransferase G.